The sequence spans 297 residues: Acetylglutamate kinase (297 aa).

Substrate contacts are provided by residues Gly70 to Gly71, Arg92, and Asn194.

Belongs to the acetylglutamate kinase family. ArgB subfamily.

It localises to the cytoplasm. It carries out the reaction N-acetyl-L-glutamate + ATP = N-acetyl-L-glutamyl 5-phosphate + ADP. The protein operates within amino-acid biosynthesis; L-arginine biosynthesis; N(2)-acetyl-L-ornithine from L-glutamate: step 2/4. Catalyzes the ATP-dependent phosphorylation of N-acetyl-L-glutamate. In Janthinobacterium sp. (strain Marseille) (Minibacterium massiliensis), this protein is Acetylglutamate kinase.